The sequence spans 238 residues: Ribonuclease PH (238 aa).

Phosphate is bound by residues R86 and 124–126 (GTR).

This sequence belongs to the RNase PH family. In terms of assembly, homohexameric ring arranged as a trimer of dimers.

The enzyme catalyses tRNA(n+1) + phosphate = tRNA(n) + a ribonucleoside 5'-diphosphate. Its function is as follows. Phosphorolytic 3'-5' exoribonuclease that plays an important role in tRNA 3'-end maturation. Removes nucleotide residues following the 3'-CCA terminus of tRNAs; can also add nucleotides to the ends of RNA molecules by using nucleoside diphosphates as substrates, but this may not be physiologically important. Probably plays a role in initiation of 16S rRNA degradation (leading to ribosome degradation) during starvation. This chain is Ribonuclease PH, found in Halorhodospira halophila (strain DSM 244 / SL1) (Ectothiorhodospira halophila (strain DSM 244 / SL1)).